A 283-amino-acid polypeptide reads, in one-letter code: Elongation factor Ts (283 aa).

Positions 80 to 83 (TDFV) are involved in Mg(2+) ion dislocation from EF-Tu.

This sequence belongs to the EF-Ts family.

The protein resides in the cytoplasm. In terms of biological role, associates with the EF-Tu.GDP complex and induces the exchange of GDP to GTP. It remains bound to the aminoacyl-tRNA.EF-Tu.GTP complex up to the GTP hydrolysis stage on the ribosome. In Salmonella paratyphi A (strain ATCC 9150 / SARB42), this protein is Elongation factor Ts.